A 216-amino-acid polypeptide reads, in one-letter code: MLSVEELSCVRDERVLFDNLSFTISSGELIQIEGHNGAGKTTLLRIIAGLGRADSGQVCWKSEGIESAREDYYQDLLFLGHQTGVKRELTAYENLAFFQAMHNESIDQDMSGKPPVLGDESLWQALAQVGLAGREDVLAGQLSAGQQRRVALARLWISNHKLWILDEPLTAIDKQGVKVLESLFLSHVERGGIVLLTTHQDMFADSNHLRKIKLGQ.

Positions L2–G215 constitute an ABC transporter domain. G34–T41 contacts ATP.

This sequence belongs to the ABC transporter superfamily. CcmA exporter (TC 3.A.1.107) family. In terms of assembly, the complex is composed of two ATP-binding proteins (CcmA) and two transmembrane proteins (CcmB).

Its subcellular location is the cell inner membrane. It carries out the reaction heme b(in) + ATP + H2O = heme b(out) + ADP + phosphate + H(+). Functionally, part of the ABC transporter complex CcmAB involved in the biogenesis of c-type cytochromes; once thought to export heme, this seems not to be the case, but its exact role is uncertain. Responsible for energy coupling to the transport system. In Photobacterium profundum (strain SS9), this protein is Cytochrome c biogenesis ATP-binding export protein CcmA.